Reading from the N-terminus, the 318-residue chain is Holliday junction branch migration complex subunit RuvB (318 aa).

The large ATPase domain (RuvB-L) stretch occupies residues 1–168; the sequence is MPENLEIRPS…FGYVAKIVDY (168 aa). ATP contacts are provided by I7, R8, G49, K52, T53, T54, R158, Y168, and R205. Residue T53 participates in Mg(2+) binding. The small ATPAse domain (RuvB-S) stretch occupies residues 169-239; the sequence is TLEDMIQIIR…IVNKTFDSIG (71 aa). Residues 242–318 are head domain (RuvB-H); it reads NQGLSQINIE…RDYLLELKTN (77 aa). The DNA site is built by R278, K297, and R302.

It belongs to the RuvB family. In terms of assembly, homohexamer. Forms an RuvA(8)-RuvB(12)-Holliday junction (HJ) complex. HJ DNA is sandwiched between 2 RuvA tetramers; dsDNA enters through RuvA and exits via RuvB. An RuvB hexamer assembles on each DNA strand where it exits the tetramer. Each RuvB hexamer is contacted by two RuvA subunits (via domain III) on 2 adjacent RuvB subunits; this complex drives branch migration. In the full resolvosome a probable DNA-RuvA(4)-RuvB(12)-RuvC(2) complex forms which resolves the HJ.

The protein localises to the cytoplasm. It carries out the reaction ATP + H2O = ADP + phosphate + H(+). Functionally, the RuvA-RuvB-RuvC complex processes Holliday junction (HJ) DNA during genetic recombination and DNA repair, while the RuvA-RuvB complex plays an important role in the rescue of blocked DNA replication forks via replication fork reversal (RFR). RuvA specifically binds to HJ cruciform DNA, conferring on it an open structure. The RuvB hexamer acts as an ATP-dependent pump, pulling dsDNA into and through the RuvAB complex. RuvB forms 2 homohexamers on either side of HJ DNA bound by 1 or 2 RuvA tetramers; 4 subunits per hexamer contact DNA at a time. Coordinated motions by a converter formed by DNA-disengaged RuvB subunits stimulates ATP hydrolysis and nucleotide exchange. Immobilization of the converter enables RuvB to convert the ATP-contained energy into a lever motion, pulling 2 nucleotides of DNA out of the RuvA tetramer per ATP hydrolyzed, thus driving DNA branch migration. The RuvB motors rotate together with the DNA substrate, which together with the progressing nucleotide cycle form the mechanistic basis for DNA recombination by continuous HJ branch migration. Branch migration allows RuvC to scan DNA until it finds its consensus sequence, where it cleaves and resolves cruciform DNA. The protein is Holliday junction branch migration complex subunit RuvB of Mesomycoplasma hyopneumoniae (strain 232) (Mycoplasma hyopneumoniae).